The sequence spans 104 residues: DNA-directed RNA polymerase subunit omega (104 aa).

A disordered region spans residues 76-104 (IEEEKRRKEEEEKKIKEQIAKEKEDGEKI).

The protein belongs to the RNA polymerase subunit omega family. The RNAP catalytic core consists of 2 alpha, 1 beta, 1 beta' and 1 omega subunit. When a sigma factor is associated with the core the holoenzyme is formed, which can initiate transcription.

The enzyme catalyses RNA(n) + a ribonucleoside 5'-triphosphate = RNA(n+1) + diphosphate. In terms of biological role, promotes RNA polymerase assembly. Latches the N- and C-terminal regions of the beta' subunit thereby facilitating its interaction with the beta and alpha subunits. This is DNA-directed RNA polymerase subunit omega from Streptococcus pneumoniae (strain CGSP14).